Reading from the N-terminus, the 328-residue chain is MKIHLDRTSSGFCIGVQGTINVAEDKLQELGQLYSYGDVVHNEVEVKRLEALGLVTVDDAGFKQLSNTSVLIRAHGEPPATYTIAAENNLAITDTTCPVVSRLQRTTRLLFQLGYQIIIYGKRVHPEVIGLNGQCDNCALIIKHADLSDPKELEGFEPSAKTALISQTTMDIPGFYELKANLEAYVARVNGSAVEPWMAIRDIDITADMSKVRTMPRYVFKDTICRQVSSRNQKLHDFSLANDVVVFVAGKKSSNGQVLFNICKAANPRTFFIEDIEEINPEWFAAHEGKAVESVGICGATSTPMWHLEKVANYIEATYANSESIIAQ.

Residue Cys13 participates in [4Fe-4S] cluster binding. His41 and His75 together coordinate (2E)-4-hydroxy-3-methylbut-2-enyl diphosphate. 2 residues coordinate dimethylallyl diphosphate: His41 and His75. Residues His41 and His75 each contribute to the isopentenyl diphosphate site. Cys97 contributes to the [4Fe-4S] cluster binding site. His125 is a (2E)-4-hydroxy-3-methylbut-2-enyl diphosphate binding site. Dimethylallyl diphosphate is bound at residue His125. Position 125 (His125) interacts with isopentenyl diphosphate. The active-site Proton donor is the Glu127. Position 168 (Thr168) interacts with (2E)-4-hydroxy-3-methylbut-2-enyl diphosphate. Cys225 serves as a coordination point for [4Fe-4S] cluster. (2E)-4-hydroxy-3-methylbut-2-enyl diphosphate-binding residues include Ser253, Ser254, Asn255, and Ser302. Dimethylallyl diphosphate-binding residues include Ser253, Ser254, Asn255, and Ser302. Positions 253, 254, 255, and 302 each coordinate isopentenyl diphosphate.

It belongs to the IspH family. It depends on [4Fe-4S] cluster as a cofactor.

It carries out the reaction isopentenyl diphosphate + 2 oxidized [2Fe-2S]-[ferredoxin] + H2O = (2E)-4-hydroxy-3-methylbut-2-enyl diphosphate + 2 reduced [2Fe-2S]-[ferredoxin] + 2 H(+). The enzyme catalyses dimethylallyl diphosphate + 2 oxidized [2Fe-2S]-[ferredoxin] + H2O = (2E)-4-hydroxy-3-methylbut-2-enyl diphosphate + 2 reduced [2Fe-2S]-[ferredoxin] + 2 H(+). It functions in the pathway isoprenoid biosynthesis; dimethylallyl diphosphate biosynthesis; dimethylallyl diphosphate from (2E)-4-hydroxy-3-methylbutenyl diphosphate: step 1/1. The protein operates within isoprenoid biosynthesis; isopentenyl diphosphate biosynthesis via DXP pathway; isopentenyl diphosphate from 1-deoxy-D-xylulose 5-phosphate: step 6/6. Catalyzes the conversion of 1-hydroxy-2-methyl-2-(E)-butenyl 4-diphosphate (HMBPP) into a mixture of isopentenyl diphosphate (IPP) and dimethylallyl diphosphate (DMAPP). Acts in the terminal step of the DOXP/MEP pathway for isoprenoid precursor biosynthesis. The protein is 4-hydroxy-3-methylbut-2-enyl diphosphate reductase of Chlorobium chlorochromatii (strain CaD3).